Reading from the N-terminus, the 279-residue chain is Putative short-chain type dehydrogenase/reductase MSMEG_6031/MSMEI_5872 (279 aa).

11 to 33 (FITGAARGQGRSHAVRLAEEGAD) is a binding site for NAD(+). Residue K65 forms an Isoglutamyl lysine isopeptide (Lys-Gln) (interchain with Q-Cter in protein Pup) linkage. Substrate is bound at residue S158. The active-site Proton acceptor is the Y171.

This sequence belongs to the short-chain dehydrogenases/reductases (SDR) family.

The sequence is that of Putative short-chain type dehydrogenase/reductase MSMEG_6031/MSMEI_5872 from Mycolicibacterium smegmatis (strain ATCC 700084 / mc(2)155) (Mycobacterium smegmatis).